Consider the following 252-residue polypeptide: MLTKRIIPCLDVKGGRVVKGVQFLGLRDAGDPVEIAELYDQQGADELTFLDITASSDDRDIIIDVVRRTAERVFMPLTVGGGVRVVEDIRRLLNAGADKVSINTAAVHRPEFVSEAAEKFGSQCTVVAIDARSRAGGGWEVYTHGGRNPTGIDAVEWAQRMEGMGAGEILLTSMDRDGTKDGYDLPLTRAVVDAVSIPVIASGGVGGLSHLYDGFTQAGASACLAASIFHYREYTIEEAKSYLRERGVPVRL.

Catalysis depends on residues D11 and D130.

The protein belongs to the HisA/HisF family. As to quaternary structure, heterodimer of HisH and HisF.

It is found in the cytoplasm. The enzyme catalyses 5-[(5-phospho-1-deoxy-D-ribulos-1-ylimino)methylamino]-1-(5-phospho-beta-D-ribosyl)imidazole-4-carboxamide + L-glutamine = D-erythro-1-(imidazol-4-yl)glycerol 3-phosphate + 5-amino-1-(5-phospho-beta-D-ribosyl)imidazole-4-carboxamide + L-glutamate + H(+). Its pathway is amino-acid biosynthesis; L-histidine biosynthesis; L-histidine from 5-phospho-alpha-D-ribose 1-diphosphate: step 5/9. IGPS catalyzes the conversion of PRFAR and glutamine to IGP, AICAR and glutamate. The HisF subunit catalyzes the cyclization activity that produces IGP and AICAR from PRFAR using the ammonia provided by the HisH subunit. The chain is Imidazole glycerol phosphate synthase subunit HisF from Citrifermentans bemidjiense (strain ATCC BAA-1014 / DSM 16622 / JCM 12645 / Bem) (Geobacter bemidjiensis).